A 288-amino-acid chain; its full sequence is Elongation factor Ts (288 aa).

The tract at residues 82-85 (TDFV) is involved in Mg(2+) ion dislocation from EF-Tu.

It belongs to the EF-Ts family.

The protein resides in the cytoplasm. Associates with the EF-Tu.GDP complex and induces the exchange of GDP to GTP. It remains bound to the aminoacyl-tRNA.EF-Tu.GTP complex up to the GTP hydrolysis stage on the ribosome. The sequence is that of Elongation factor Ts from Chlorobium chlorochromatii (strain CaD3).